The following is a 596-amino-acid chain: Mitoguardin 2 (596 aa).

2 helical membrane-spanning segments follow: residues 11 to 31 (IMQA…STFG) and 40 to 60 (LSPS…ALAL). Disordered stretches follow at residues 67–158 (RRGR…AAWE) and 576–596 (ALPK…GQQD). Residues 110–123 (MSPSTRSNDTLSGV) show a composition bias toward polar residues. Positions 124 to 140 (SSIAQSKHSSSSHSIAS) are enriched in low complexity. Composition is skewed to polar residues over residues 143–152 (VPSSPNQSVN) and 583–596 (QAES…GQQD).

It belongs to the mitoguardin family. As to quaternary structure, homodimer and heterodimer; forms heterodimers with miga1.

It localises to the mitochondrion outer membrane. Regulator of mitochondrial fusion: acts by forming homo- and heterodimers at the mitochondrial outer membrane and facilitating the formation of pld6/MitoPLD dimers. May act by regulating phospholipid metabolism via pld6/MitoPLD. This is Mitoguardin 2 from Danio rerio (Zebrafish).